Reading from the N-terminus, the 865-residue chain is cGMP-specific 3',5'-cyclic phosphodiesterase (865 aa).

At S92 the chain carries Phosphoserine. GAF domains are found at residues 154 to 304 (DVTA…GIVL) and 336 to 493 (SLEV…GLGI). The PDEase domain maps to 526–850 (ETRELQSLAA…QKWQALAEQQ (325 aa)). The active-site Proton donor is the H603. H607, H643, D644, and D754 together coordinate Zn(2+). D644 lines the Mg(2+) pocket. Q807 is a binding site for 3',5'-cyclic GMP.

It belongs to the cyclic nucleotide phosphodiesterase family. Zn(2+) serves as cofactor. Requires Mg(2+) as cofactor. Post-translationally, phosphorylation is regulated by binding of cGMP to the two allosteric sites. Phosphorylation by PRKG1 leads to its activation.

The enzyme catalyses 3',5'-cyclic GMP + H2O = GMP + H(+). Its pathway is purine metabolism; 3',5'-cyclic GMP degradation; GMP from 3',5'-cyclic GMP: step 1/1. Most potently inhibited by zaprinast and dipyridamole. Plays a role in signal transduction by regulating the intracellular concentration of cyclic nucleotides. This phosphodiesterase catalyzes the specific hydrolysis of cGMP to 5'-GMP. Specifically regulates nitric-oxide-generated cGMP. The polypeptide is cGMP-specific 3',5'-cyclic phosphodiesterase (PDE5A) (Bos taurus (Bovine)).